Consider the following 203-residue polypeptide: LexA repressor (203 aa).

The segment at residues 30-50 (VREICQAVSLKSTSTVHGHLK) is a DNA-binding region (H-T-H motif). Catalysis depends on for autocatalytic cleavage activity residues Ser127 and Lys164.

It belongs to the peptidase S24 family. As to quaternary structure, homodimer.

It catalyses the reaction Hydrolysis of Ala-|-Gly bond in repressor LexA.. In terms of biological role, represses a number of genes involved in the response to DNA damage (SOS response), including recA and lexA. In the presence of single-stranded DNA, RecA interacts with LexA causing an autocatalytic cleavage which disrupts the DNA-binding part of LexA, leading to derepression of the SOS regulon and eventually DNA repair. The chain is LexA repressor from Clostridium perfringens (strain SM101 / Type A).